The primary structure comprises 503 residues: Glutamate--tRNA ligase (503 aa).

Positions Pro26–Leu36 match the 'HIGH' region motif. Positions Thr126 to Ala148 are disordered. Residues Val130–Ala148 are compositionally biased toward basic and acidic residues. The 'KMSKS' region signature appears at Lys270–Arg274. Residue Lys273 participates in ATP binding.

The protein belongs to the class-I aminoacyl-tRNA synthetase family. Glutamate--tRNA ligase type 1 subfamily. As to quaternary structure, monomer.

It is found in the cytoplasm. It catalyses the reaction tRNA(Glu) + L-glutamate + ATP = L-glutamyl-tRNA(Glu) + AMP + diphosphate. In terms of biological role, catalyzes the attachment of glutamate to tRNA(Glu) in a two-step reaction: glutamate is first activated by ATP to form Glu-AMP and then transferred to the acceptor end of tRNA(Glu). The protein is Glutamate--tRNA ligase of Saccharopolyspora erythraea (strain ATCC 11635 / DSM 40517 / JCM 4748 / NBRC 13426 / NCIMB 8594 / NRRL 2338).